The sequence spans 432 residues: Glutamyl-tRNA reductase (432 aa).

Residues 55–58 (TCNR), S114, 119–121 (ETQ), and Q125 each bind substrate. Catalysis depends on C56, which acts as the Nucleophile. Residue 194 to 199 (GAGEMI) participates in NADP(+) binding.

Belongs to the glutamyl-tRNA reductase family. Homodimer.

It catalyses the reaction (S)-4-amino-5-oxopentanoate + tRNA(Glu) + NADP(+) = L-glutamyl-tRNA(Glu) + NADPH + H(+). It functions in the pathway porphyrin-containing compound metabolism; protoporphyrin-IX biosynthesis; 5-aminolevulinate from L-glutamyl-tRNA(Glu): step 1/2. Catalyzes the NADPH-dependent reduction of glutamyl-tRNA(Glu) to glutamate 1-semialdehyde (GSA). In Burkholderia pseudomallei (strain 1710b), this protein is Glutamyl-tRNA reductase.